A 424-amino-acid chain; its full sequence is Dapdiamide A synthase (424 aa).

The ATP-grasp domain maps to 120–318 (QEQLALKGVA…QISKLAQAVL (199 aa)). Residue 147-209 (AGHAHWPVVL…QEFLAGEEFV (63 aa)) participates in ATP binding. The Mg(2+) site is built by glutamate 275 and glutamate 287.

The cofactor is Mg(2+). It depends on Mn(2+) as a cofactor.

The catalysed reaction is 3-[[[(2R,3R)-3-carboxyoxiran-2-yl]carbonyl]amino]-L-alanine + L-valine + ATP = dapdiamide E + ADP + phosphate + H(+). The enzyme catalyses N(3)-fumaramoyl-(S)-2,3-diaminopropanoate + L-valine + ATP = dapdiamide A + ADP + phosphate + H(+). It catalyses the reaction N(3)-fumaramoyl-(S)-2,3-diaminopropanoate + L-isoleucine + ATP = dapdiamide B + ADP + phosphate + H(+). It carries out the reaction N(3)-fumaramoyl-(S)-2,3-diaminopropanoate + L-leucine + ATP = dapdiamide C + ADP + phosphate + H(+). The protein operates within antibiotic biosynthesis. In terms of biological role, involved in dapdiamide antibiotics biosynthesis. Ligates N-beta-fumaramoyl-DAP and valine, isoleucine or leucine to form dapdiamides A, B or C, respectively. Also ligates N-beta-epoxysuccinamoyl-DAP and valine to form dapdiamide E. The chain is Dapdiamide A synthase from Enterobacter agglomerans (Erwinia herbicola).